Here is a 1048-residue protein sequence, read N- to C-terminus: Putative helicase/primase complex protein (1048 aa).

The disordered stretch occupies residues 1025–1048 (STKEESSPTREETSSIKEKTFTET).

The protein belongs to the asfivirus F1055L family.

In terms of biological role, may be involved in DNA replication. The sequence is that of Putative helicase/primase complex protein from African swine fever virus (isolate Pig/Kenya/KEN-50/1950) (ASFV).